We begin with the raw amino-acid sequence, 273 residues long: HLA class II histocompatibility antigen, DO beta chain (273 aa).

The first 26 residues, 1–26 (MGSGWVPWVVALLVNLTRLDSSMTQG), serve as a signal peptide directing secretion. A beta-1 region spans residues 27 to 120 (TDSPEDFVIQ…LGAPFTVGRK (94 aa)). The Extracellular portion of the chain corresponds to 27 to 224 (TDSPEDFVIQ…RAQSEYSWRK (198 aa)). Cystine bridges form between Cys-41/Cys-105 and Cys-143/Cys-199. Asn-45 carries N-linked (GlcNAc...) asparagine glycosylation. Positions 121–214 (VQPEVTVYPE…SLLSPVSVEW (94 aa)) are beta-2. Residues 123 to 213 (PEVTVYPERT…SSLLSPVSVE (91 aa)) enclose the Ig-like C1-type domain. The connecting peptide stretch occupies residues 215–224 (RAQSEYSWRK). The chain crosses the membrane as a helical span at residues 225 to 245 (MLSGIAAFLLGLIFLLVGIVI). Residues 246-273 (QLRAQKGYVRTQMSGNEVSRAVLLPQSC) lie on the Cytoplasmic side of the membrane.

The protein belongs to the MHC class II family. In terms of assembly, heterodimer of an alpha chain (DOA) and a beta chain (DOB). Forms a heterotetrameric complex with an HLA-DM molecule during intracellular transport in endosomal/lysosomal compartments in B-cells.

The protein resides in the endosome membrane. Its subcellular location is the lysosome membrane. In terms of biological role, important modulator in the HLA class II restricted antigen presentation pathway by interaction with the HLA-DM molecule in B-cells. Modifies peptide exchange activity of HLA-DM. The protein is HLA class II histocompatibility antigen, DO beta chain (HLA-DOB) of Homo sapiens (Human).